The sequence spans 88 residues: MSKVAAVLKVMPDSPDIDLDGLEADLSESLPDGAEINGTDTEEVAFGLTALLTTVIVPDDSGGTEAVEDAFGAVDDVESVSVEEVGRL.

The protein belongs to the EF-1-beta/EF-1-delta family.

Its function is as follows. Promotes the exchange of GDP for GTP in EF-1-alpha/GDP, thus allowing the regeneration of EF-1-alpha/GTP that could then be used to form the ternary complex EF-1-alpha/GTP/AAtRNA. The sequence is that of Elongation factor 1-beta from Halobacterium salinarum (strain ATCC 29341 / DSM 671 / R1).